An 854-amino-acid polypeptide reads, in one-letter code: DNA mismatch repair protein MutS (854 aa).

The tract at residues 1–21 (MTASDIQPTEPHTPPTPHADT) is disordered. 658–665 (GPNASGKS) contacts ATP.

The protein belongs to the DNA mismatch repair MutS family.

Functionally, this protein is involved in the repair of mismatches in DNA. It is possible that it carries out the mismatch recognition step. This protein has a weak ATPase activity. This Trichormus variabilis (strain ATCC 29413 / PCC 7937) (Anabaena variabilis) protein is DNA mismatch repair protein MutS.